Here is a 64-residue protein sequence, read N- to C-terminus: Translational regulator CsrA (64 aa).

It belongs to the CsrA/RsmA family. Homodimer; the beta-strands of each monomer intercalate to form a hydrophobic core, while the alpha-helices form wings that extend away from the core.

It is found in the cytoplasm. A key translational regulator that binds mRNA to regulate translation initiation and/or mRNA stability. Mediates global changes in gene expression, shifting from rapid growth to stress survival by linking envelope stress, the stringent response and the catabolite repression systems. Usually binds in the 5'-UTR; binding at or near the Shine-Dalgarno sequence prevents ribosome-binding, repressing translation, binding elsewhere in the 5'-UTR can activate translation and/or stabilize the mRNA. Its function is antagonized by small RNA(s). The chain is Translational regulator CsrA from Thioalkalivibrio sulfidiphilus (strain HL-EbGR7).